A 458-amino-acid polypeptide reads, in one-letter code: Chitin deacetylase 2 (458 aa).

The signal sequence occupies residues 1–51 (MIPSTAAAALLTLTAGVALAHPGCGGQEIGRRNVGGPMVYRRDVTDEASAA). N87, N99, and N125 each carry an N-linked (GlcNAc...) asparagine glycan. One can recognise a NodB homology domain in the interval 158–348 (MTWGLGFDDG…IKSAFSYIVP (191 aa)). The active-site Proton acceptor is the D165. An acetate-binding site is contributed by D165. D166 contributes to the Co(2+) binding site. Residue N169 is glycosylated (N-linked (GlcNAc...) asparagine). The Co(2+) site is built by H215 and H219. Y256 contributes to the acetate binding site. N-linked (GlcNAc...) asparagine glycosylation is found at N271 and N309. H322 acts as the Proton donor in catalysis. 5 N-linked (GlcNAc...) asparagine glycosylation sites follow: N326, N354, N363, N378, and N393. The disordered stretch occupies residues 382-430 (STTQKDGSSSTNTSSSGSGSAAGSASATSSSDDSSSSGSASASSSSSNA). S427 carries GPI-anchor amidated serine lipidation. The propeptide at 428-458 (SNASSGALGMFDGLSGVGLVLSGVVAGVMLL) is removed in mature form. The N-linked (GlcNAc...) asparagine glycan is linked to N429.

It belongs to the polysaccharide deacetylase family. It depends on Co(2+) as a cofactor. Post-translationally, glycosylated.

The protein localises to the secreted. The protein resides in the cell wall. It localises to the cell membrane. The catalysed reaction is [(1-&gt;4)-N-acetyl-beta-D-glucosaminyl](n) + n H2O = chitosan + n acetate. In terms of biological role, hydrolyzes the N-acetamido groups of N-acetyl-D-glucosamine residues in chitin to form chitosan and acetate. Chitosan is required to anchor melanin to the cell wall, for maintenance of cell wall integrity, and for cytokinesis. This Cryptococcus neoformans var. neoformans serotype D (strain B-3501A) (Filobasidiella neoformans) protein is Chitin deacetylase 2.